Reading from the N-terminus, the 332-residue chain is 4-hydroxythreonine-4-phosphate dehydrogenase (332 aa).

His-136 and Thr-137 together coordinate substrate. A divalent metal cation is bound by residues His-166, His-211, and His-266. Positions 274, 283, and 292 each coordinate substrate.

It belongs to the PdxA family. Homodimer. Zn(2+) is required as a cofactor. It depends on Mg(2+) as a cofactor. The cofactor is Co(2+).

It is found in the cytoplasm. It catalyses the reaction 4-(phosphooxy)-L-threonine + NAD(+) = 3-amino-2-oxopropyl phosphate + CO2 + NADH. The protein operates within cofactor biosynthesis; pyridoxine 5'-phosphate biosynthesis; pyridoxine 5'-phosphate from D-erythrose 4-phosphate: step 4/5. Functionally, catalyzes the NAD(P)-dependent oxidation of 4-(phosphooxy)-L-threonine (HTP) into 2-amino-3-oxo-4-(phosphooxy)butyric acid which spontaneously decarboxylates to form 3-amino-2-oxopropyl phosphate (AHAP). In Wigglesworthia glossinidia brevipalpis, this protein is 4-hydroxythreonine-4-phosphate dehydrogenase.